The following is a 340-amino-acid chain: Deubiquitinase SseL (340 aa).

Residue His-223 is part of the active site. Cys-285 (nucleophile) is an active-site residue.

This sequence belongs to the peptidase C79 family.

The protein resides in the secreted. The protein localises to the host cytoplasm. Effector proteins function to alter host cell physiology and promote bacterial survival in host tissues. This protease targets the host cell ubiquitin pathway by acting as a deubiquitinase in infected host cells. Specifically hydrolyzes mono- and polyubiquitin substrates in vitro with a preference for 'Lys-63'-linked ubiquitin chains, suggesting that it interferes with a signaling pathway rather than inhibiting proteasomal-dependent degradation of its targets. Does not possess desumoylating activity. Is required for the Salmonella-induced delayed cytotoxicity in macrophages and full virulence. Is not required for intracellular bacterial replication. The protein is Deubiquitinase SseL (sseL) of Salmonella typhimurium (strain LT2 / SGSC1412 / ATCC 700720).